We begin with the raw amino-acid sequence, 69 residues long: Toxin Tz2 (69 aa).

The N-terminal stretch at 1-7 (IEVVMGG) is a signal peptide. The 62-residue stretch at 8 to 69 (KEGYLLDKSN…KMWDLKTNKC (62 aa)) folds into the LCN-type CS-alpha/beta domain. 4 disulfide bridges follow: cysteine 19–cysteine 69, cysteine 23–cysteine 45, cysteine 31–cysteine 50, and cysteine 35–cysteine 52.

This sequence belongs to the long (4 C-C) scorpion toxin superfamily. Sodium channel inhibitor family. Beta subfamily. Expressed by the venom gland.

It localises to the secreted. In terms of biological role, beta toxins bind voltage-independently at site-4 of sodium channels (Nav) and shift the voltage of activation toward more negative potentials thereby affecting sodium channel activation and promoting spontaneous and repetitive firing. This chain is Toxin Tz2, found in Tityus zulianus (Venezuelan scorpion).